The sequence spans 399 residues: Succinate--CoA ligase [ADP-forming] subunit beta (399 aa).

The ATP-grasp domain occupies 9-254 (KALLREFGVP…ESEEDAKEIE (246 aa)). ATP is bound by residues lysine 46, 53–55 (GRG), glutamate 109, serine 112, and glutamate 117. 2 residues coordinate Mg(2+): asparagine 209 and aspartate 223. Substrate is bound by residues asparagine 274 and 331-333 (GIM).

Belongs to the succinate/malate CoA ligase beta subunit family. As to quaternary structure, heterotetramer of two alpha and two beta subunits. The cofactor is Mg(2+).

It catalyses the reaction succinate + ATP + CoA = succinyl-CoA + ADP + phosphate. It carries out the reaction GTP + succinate + CoA = succinyl-CoA + GDP + phosphate. Its pathway is carbohydrate metabolism; tricarboxylic acid cycle; succinate from succinyl-CoA (ligase route): step 1/1. Its function is as follows. Succinyl-CoA synthetase functions in the citric acid cycle (TCA), coupling the hydrolysis of succinyl-CoA to the synthesis of either ATP or GTP and thus represents the only step of substrate-level phosphorylation in the TCA. The beta subunit provides nucleotide specificity of the enzyme and binds the substrate succinate, while the binding sites for coenzyme A and phosphate are found in the alpha subunit. The chain is Succinate--CoA ligase [ADP-forming] subunit beta from Nitrobacter winogradskyi (strain ATCC 25391 / DSM 10237 / CIP 104748 / NCIMB 11846 / Nb-255).